Consider the following 406-residue polypeptide: Argininosuccinate synthase (406 aa).

ATP-binding positions include A11 to S19 and A38. L-citrulline-binding residues include Y91 and S96. G121 contributes to the ATP binding site. 3 residues coordinate L-aspartate: T123, N127, and D128. Position 127 (N127) interacts with L-citrulline. L-citrulline is bound by residues R131, S182, S191, E267, and Y279.

This sequence belongs to the argininosuccinate synthase family. Type 1 subfamily. Homotetramer.

The protein resides in the cytoplasm. It carries out the reaction L-citrulline + L-aspartate + ATP = 2-(N(omega)-L-arginino)succinate + AMP + diphosphate + H(+). It participates in amino-acid biosynthesis; L-arginine biosynthesis; L-arginine from L-ornithine and carbamoyl phosphate: step 2/3. This is Argininosuccinate synthase from Rhodospirillum centenum (strain ATCC 51521 / SW).